The sequence spans 146 residues: MORN repeat-containing protein 4 (146 aa).

MORN repeat units lie at residues 16 to 38, 39 to 61, 62 to 84, and 85 to 107; these read YRGEWKEGRRHGFGQLMFADGGT, YLGHFENGLFNGFGVLTFSDGSR, YEGEFAQGKFNGVGVFIRHDNMT, and FEGEFKNGRVDGLGLLTFPDGSH.

In terms of assembly, interacts with MYO3A. Retina.

It is found in the cytoplasm. The protein resides in the cell projection. The protein localises to the filopodium tip. It localises to the stereocilium. Plays a role in promoting axonal degeneration following neuronal injury by toxic insult or trauma. The protein is MORN repeat-containing protein 4 (MORN4) of Bos taurus (Bovine).